The following is a 78-amino-acid chain: Biotin synthase auxiliary protein (78 aa).

It belongs to the BsaP family. Requires iron-sulfur cluster as cofactor.

Its function is as follows. Required for the activity of the biotin synthase BioB. The sequence is that of Biotin synthase auxiliary protein from Mycolicibacterium smegmatis (strain ATCC 700084 / mc(2)155) (Mycobacterium smegmatis).